We begin with the raw amino-acid sequence, 79 residues long: Putative defensin-like protein 80 (79 aa).

The first 26 residues, 1-26 (MDVQRSSYIFIALSIIAMFLITGVKP), serve as a signal peptide directing secretion. 4 disulfide bridges follow: C32–C65, C36–C58, C44–C63, and C48–C64.

This sequence belongs to the DEFL family.

The protein localises to the secreted. The chain is Putative defensin-like protein 80 (LCR81) from Arabidopsis thaliana (Mouse-ear cress).